Reading from the N-terminus, the 404-residue chain is Argininosuccinate synthase (404 aa).

Residues 13–21 (AYSGGLDTS) and alanine 41 each bind ATP. Residues tyrosine 93 and serine 98 each contribute to the L-citrulline site. Glycine 123 serves as a coordination point for ATP. Threonine 125, asparagine 129, and aspartate 130 together coordinate L-aspartate. Residue asparagine 129 participates in L-citrulline binding. 5 residues coordinate L-citrulline: arginine 133, serine 182, serine 191, glutamate 267, and tyrosine 279.

It belongs to the argininosuccinate synthase family. Type 1 subfamily. In terms of assembly, homotetramer.

It localises to the cytoplasm. The catalysed reaction is L-citrulline + L-aspartate + ATP = 2-(N(omega)-L-arginino)succinate + AMP + diphosphate + H(+). Its pathway is amino-acid biosynthesis; L-arginine biosynthesis; L-arginine from L-ornithine and carbamoyl phosphate: step 2/3. The protein is Argininosuccinate synthase of Moritella profunda.